The chain runs to 274 residues: MSEISIATSVPSGPGPLIGNQPDGPAKVIVRDLNFYYGQNHALKHINLSLAANRVTAFIGPSGCGKSTLLRVFNRMYDLYPGQRAEGQVMLDGNNILDPKLDLNLLRARVGMVFQKPTPFPMTIYENIAFGIRLYEKISKSEMDGRVEKALRSAALWNEVKDKLNASGLSLSGGQQQRLCIARTIAVRPEVILFDEPCSALDPISTAKIEELIDELKEDYTIAIVTHNMQQAARVSESTAFMYLGELIEFGPTNKIFTSPNDRRTQDYITGRFG.

Positions 1-11 (MSEISIATSVP) are enriched in polar residues. Residues 1-21 (MSEISIATSVPSGPGPLIGNQ) are disordered. The ABC transporter domain occupies 28-269 (VIVRDLNFYY…PNDRRTQDYI (242 aa)). 60-67 (GPSGCGKS) contacts ATP.

Belongs to the ABC transporter superfamily. Phosphate importer (TC 3.A.1.7) family. In terms of assembly, the complex is composed of two ATP-binding proteins (PstB), two transmembrane proteins (PstC and PstA) and a solute-binding protein (PstS).

The protein resides in the cell inner membrane. It carries out the reaction phosphate(out) + ATP + H2O = ADP + 2 phosphate(in) + H(+). Part of the ABC transporter complex PstSACB involved in phosphate import. Responsible for energy coupling to the transport system. In Rhodopseudomonas palustris (strain BisB5), this protein is Phosphate import ATP-binding protein PstB.